The sequence spans 208 residues: LexA repressor (208 aa).

Positions 29–49 form a DNA-binding region, H-T-H motif; that stretch reads VREICSAVGLSSTSTVHGHIS. Residues Ser-129 and Lys-167 each act as for autocatalytic cleavage activity in the active site.

It belongs to the peptidase S24 family. In terms of assembly, homodimer.

It catalyses the reaction Hydrolysis of Ala-|-Gly bond in repressor LexA.. Functionally, represses a number of genes involved in the response to DNA damage (SOS response), including recA and lexA. In the presence of single-stranded DNA, RecA interacts with LexA causing an autocatalytic cleavage which disrupts the DNA-binding part of LexA, leading to derepression of the SOS regulon and eventually DNA repair. This Limosilactobacillus reuteri (strain DSM 20016) (Lactobacillus reuteri) protein is LexA repressor.